Consider the following 475-residue polypeptide: Aspartyl/glutamyl-tRNA(Asn/Gln) amidotransferase subunit B (475 aa).

It belongs to the GatB/GatE family. GatB subfamily. Heterotrimer of A, B and C subunits.

It catalyses the reaction L-glutamyl-tRNA(Gln) + L-glutamine + ATP + H2O = L-glutaminyl-tRNA(Gln) + L-glutamate + ADP + phosphate + H(+). The enzyme catalyses L-aspartyl-tRNA(Asn) + L-glutamine + ATP + H2O = L-asparaginyl-tRNA(Asn) + L-glutamate + ADP + phosphate + 2 H(+). Allows the formation of correctly charged Asn-tRNA(Asn) or Gln-tRNA(Gln) through the transamidation of misacylated Asp-tRNA(Asn) or Glu-tRNA(Gln) in organisms which lack either or both of asparaginyl-tRNA or glutaminyl-tRNA synthetases. The reaction takes place in the presence of glutamine and ATP through an activated phospho-Asp-tRNA(Asn) or phospho-Glu-tRNA(Gln). This Chlorobium luteolum (strain DSM 273 / BCRC 81028 / 2530) (Pelodictyon luteolum) protein is Aspartyl/glutamyl-tRNA(Asn/Gln) amidotransferase subunit B.